The sequence spans 182 residues: NADH-dependent FAD reductase (182 aa).

Residue D16 coordinates NAD(+). Residues N47–S48, C62–G64, and H98 each bind FAD. H143 lines the NAD(+) pocket.

The protein belongs to the non-flavoprotein flavin reductase family. As to quaternary structure, homodimer.

It catalyses the reaction FADH2 + NAD(+) = FAD + NADH + 2 H(+). It functions in the pathway antibiotic biosynthesis. Its activity is regulated as follows. The SgcE6-SgcC hydroxylation activity decreases in the presence of excess FAD. In terms of biological role, reductase component of a two-component system involved in the biosynthesis of the enediyne antitumor antibiotic C-1027. SgcE6 provides the FADH(2) required by both the halogenase SgcC3 and the monooxygenase SgcC through free diffusion. Accepts only NADH and FAD as substrates. The sequence is that of NADH-dependent FAD reductase from Streptomyces globisporus.